We begin with the raw amino-acid sequence, 335 residues long: Methionine import ATP-binding protein MetN 1 (335 aa).

One can recognise an ABC transporter domain in the interval 2–242; the sequence is IEFHNVHKTY…PQHATTRRFV (241 aa). Residue 38–45 participates in ATP binding; the sequence is GHSGAGKS.

It belongs to the ABC transporter superfamily. Methionine importer (TC 3.A.1.24) family. As to quaternary structure, the complex is composed of two ATP-binding proteins (MetN), two transmembrane proteins (MetI) and a solute-binding protein (MetQ).

It is found in the cell inner membrane. It catalyses the reaction L-methionine(out) + ATP + H2O = L-methionine(in) + ADP + phosphate + H(+). It carries out the reaction D-methionine(out) + ATP + H2O = D-methionine(in) + ADP + phosphate + H(+). Its function is as follows. Part of the ABC transporter complex MetNIQ involved in methionine import. Responsible for energy coupling to the transport system. This Pseudomonas syringae pv. syringae (strain B728a) protein is Methionine import ATP-binding protein MetN 1.